A 107-amino-acid polypeptide reads, in one-letter code: Protein phosphatase 1 regulatory subunit INH3 (107 aa).

A compositionally biased stretch (low complexity) spans 1–14; the sequence is MSTATRPSSSATTS. 2 disordered regions span residues 1-40 and 69-107; these read MSTA…KKKK and PFDE…KAVD. The span at 71–80 shows a compositional bias: acidic residues; the sequence is DEDDSEEEDD. The segment covering 81–94 has biased composition (basic and acidic residues); that stretch reads NNHHCDHNHEHSES. Residues 95–107 are compositionally biased toward low complexity; sequence GEASSSNDSKAVD.

In terms of assembly, interacts with protein phosphatase 1. In terms of tissue distribution, expressed in roots, cotyledons, leaves, flowers and embryos.

Functionally, inhibitor of protein-phosphatase 1 (PP1). Binds to and inhibits PP1 activity. Required for early embryogenesis progression. This chain is Protein phosphatase 1 regulatory subunit INH3, found in Arabidopsis thaliana (Mouse-ear cress).